The primary structure comprises 449 residues: Argininosuccinate synthase (449 aa).

ATP contacts are provided by residues 17–25 (AFSGGLDTS) and Ala-43. Tyr-99 contacts L-citrulline. Positions 129 and 131 each coordinate ATP. L-aspartate is bound by residues Thr-131, Asn-135, and Asp-136. Asn-135 serves as a coordination point for L-citrulline. ATP is bound at residue Asp-136. The L-citrulline site is built by Arg-139 and Ser-192. Asp-194 provides a ligand contact to ATP. L-citrulline is bound by residues Thr-201, Glu-203, and Glu-280.

This sequence belongs to the argininosuccinate synthase family. Type 2 subfamily. Homotetramer.

The protein localises to the cytoplasm. The catalysed reaction is L-citrulline + L-aspartate + ATP = 2-(N(omega)-L-arginino)succinate + AMP + diphosphate + H(+). The protein operates within amino-acid biosynthesis; L-arginine biosynthesis; L-arginine from L-ornithine and carbamoyl phosphate: step 2/3. The polypeptide is Argininosuccinate synthase (Dickeya dadantii (strain 3937) (Erwinia chrysanthemi (strain 3937))).